Here is a 1164-residue protein sequence, read N- to C-terminus: DNA-directed RNA polymerase subunit beta (1164 aa).

2 disordered regions span residues 975–994 (RSSL…GKSN) and 1143–1164 (ANAA…MDVS). Composition is skewed to basic and acidic residues over residues 981–991 (RDGERQVDDFG) and 1152–1164 (SRDE…MDVS).

It belongs to the RNA polymerase beta chain family. As to quaternary structure, the RNAP catalytic core consists of 2 alpha, 1 beta, 1 beta' and 1 omega subunit. When a sigma factor is associated with the core the holoenzyme is formed, which can initiate transcription.

It catalyses the reaction RNA(n) + a ribonucleoside 5'-triphosphate = RNA(n+1) + diphosphate. DNA-dependent RNA polymerase catalyzes the transcription of DNA into RNA using the four ribonucleoside triphosphates as substrates. The sequence is that of DNA-directed RNA polymerase subunit beta from Corynebacterium jeikeium (strain K411).